The sequence spans 445 residues: UDP-N-acetylmuramate--L-alanine ligase (445 aa).

ATP is bound at residue 108–114; that stretch reads GSDGKTT.

It belongs to the MurCDEF family.

The protein localises to the cytoplasm. The catalysed reaction is UDP-N-acetyl-alpha-D-muramate + L-alanine + ATP = UDP-N-acetyl-alpha-D-muramoyl-L-alanine + ADP + phosphate + H(+). It participates in cell wall biogenesis; peptidoglycan biosynthesis. In terms of biological role, cell wall formation. In Pseudothermotoga lettingae (strain ATCC BAA-301 / DSM 14385 / NBRC 107922 / TMO) (Thermotoga lettingae), this protein is UDP-N-acetylmuramate--L-alanine ligase.